We begin with the raw amino-acid sequence, 510 residues long: Inositol-3-phosphate synthase (510 aa).

NAD(+) is bound by residues G70, G71, N72, N73, D143, I180, Q190, R193, T230, A231, N232, T233, G281, S282, D306, S309, N340, N341, D342, K355, G393, D394, D422, and S423.

The protein belongs to the myo-inositol 1-phosphate synthase family. Requires NAD(+) as cofactor.

It localises to the cytoplasm. The protein resides in the cytosol. Its subcellular location is the nucleus. The enzyme catalyses D-glucose 6-phosphate = 1D-myo-inositol 3-phosphate. It participates in polyol metabolism; myo-inositol biosynthesis; myo-inositol from D-glucose 6-phosphate: step 1/2. Its function is as follows. Key enzyme in myo-inositol biosynthesis pathway that catalyzes the conversion of glucose 6-phosphate to 1-myo-inositol 1-phosphate in a NAD-dependent manner. This is Inositol-3-phosphate synthase (TUR1) from Spirodela polyrhiza (Giant duckweed).